The sequence spans 342 residues: Prostasin (342 aa).

Positions 1-29 (MAPRVGLGLGQLEAVTILLLLGLLQSGIR) are cleaved as a signal peptide. Residues 30 to 32 (ADG) constitute a propeptide, activation peptide. 2 disulfide bridges follow: C37-C154 and C70-C86. One can recognise a Peptidase S1 domain in the interval 45–286 (ITGGGSAKPG…YASWIHHHVA (242 aa)). Residue H85 is the Charge relay system of the active site. N-linked (GlcNAc...) asparagine glycosylation occurs at N110. The Charge relay system role is filled by D134. N-linked (GlcNAc...) asparagine glycosylation occurs at N159. 3 cysteine pairs are disulfide-bonded: C168–C244, C201–C223, and C234–C262. S238 functions as the Charge relay system in the catalytic mechanism. The helical transmembrane segment at 320-340 (LLRPVLFLPLGLTLGLLSLWL) threads the bilayer. The propeptide occupies 323–342 (PVLFLPLGLTLGLLSLWLEH).

It belongs to the peptidase S1 family. Heterodimer of two chains, light and heavy, held by a disulfide bond.

The protein localises to the cell membrane. It localises to the secreted. The protein resides in the extracellular space. Possesses a trypsin-like cleavage specificity with a preference for poly-basic substrates. Stimulates epithelial sodium channel (ENaC) activity through activating cleavage of the gamma subunits (SCNN1G). The chain is Prostasin (Prss8) from Mus musculus (Mouse).